We begin with the raw amino-acid sequence, 225 residues long: CRISPR pre-crRNA endoribonuclease Cas5d (225 aa).

It belongs to the CRISPR-associated protein Cas5 family. Subtype I-C/Dvulg subfamily. The cofactor is Does not require a metal cofactor..

Functionally, CRISPR (clustered regularly interspaced short palindromic repeat) is an adaptive immune system that provides protection against mobile genetic elements (viruses, transposable elements and conjugative plasmids). CRISPR clusters contain spacers, sequences complementary to antecedent mobile elements, and target invading nucleic acids. CRISPR clusters are transcribed and processed into CRISPR RNA (crRNA). This protein is a sequence-specific endonuclease that cleaves pre-crRNA at G21 into mature crRNA. Does not cleave pre-crRNA associated with the T.thermophilus strain HB27 Cas5 protein (AC Q746C2) CRISPR locus. The reaction mechanism may proceed by an intramolecular attack of the 2'-hydroxyl group of G21 on the scissile phosphodiester, cutting the precursor 3' to G21 residue yielding 5'-hydroxyl and 2' and/or 3' ends lacking a hydroxyl group (perhaps a 2'/3' cyclic phosphodiester). The sequence is that of CRISPR pre-crRNA endoribonuclease Cas5d from Mannheimia succiniciproducens (strain KCTC 0769BP / MBEL55E).